The chain runs to 1048 residues: Ceruloplasmin (1048 aa).

Positions 1–19 are cleaved as a signal peptide; it reads MKIFLLCIFLILCGTSVWA. Plastocyanin-like domains are found at residues 20 to 200, 209 to 357, and 370 to 554; these read KDKH…LIHC, KEKN…VQDC, and NVRH…MKIC. Residues Y55, G64, and Y67 each contribute to the Na(+) site. Positions 120 and 122 each coordinate Cu(2+). H120 contacts O2. Residue K128 coordinates Ca(2+). N138 is a glycosylation site (N-linked (GlcNAc...) asparagine). 3 residues coordinate Ca(2+): Q143, D146, and D147. A disulfide bond links C174 and C200. Cu(2+) is bound by residues H180 and H182. Position 180 (H180) interacts with O2. N-linked (GlcNAc...) asparagine glycosylation occurs at N227. S256 lines the Na(+) pocket. C276 and C357 are disulfide-bonded. Cu(2+) contacts are provided by H295, C338, and H343. Na(+) is bound by residues F408, G417, and Y420. The cysteines at positions 530 and 554 are disulfide-linked. 2 N-linked (GlcNAc...) asparagine glycosylation sites follow: N556 and N582. The 149-residue stretch at 564–712 folds into the Plastocyanin-like 4 domain; that stretch reads RLKNVDKEFY…MKQKYTVSQC (149 aa). S611 is a Na(+) binding site. Cysteines 631 and 712 form a disulfide. Residues H650, C693, H698, and M703 each coordinate Cu(2+). Residue C693 is the Nucleophile; for glutathione peroxidase activity of the active site. The residue at position 716 (S716) is a Phosphoserine. Plastocyanin-like domains follow at residues 724 to 894 and 902 to 1044; these read GERT…LIVC and SNPI…PNEE. N-linked (GlcNAc...) asparagine glycosylation occurs at N756. Residues F761, G770, and Y773 each coordinate Na(+). Residues C868 and C894 are joined by a disulfide bond. A glycan (N-linked (GlcNAc...) asparagine) is linked at N920. S949 contributes to the Na(+) binding site. Residues H977, H980, H982, H1022, C1023, H1024, H1028, and M1033 each coordinate Cu(2+). Residues H980 and H982 each coordinate O2. Position 1024 (H1024) interacts with O2.

It belongs to the multicopper oxidase family. Found in a complex with MPO and LTF; interacts directly with MPO and LTF, which allows Fe(3+) incorporation into LTF, activation of CP ferroxidase activity and protection of CP antioxidant properties by MPO. Requires Cu(2+) as cofactor. In terms of tissue distribution, expressed by the liver and secreted in plasma. Also expressed in the hypothalamus, spleen and uterus. No expression in the cortex, heart, intestine or kidney.

Its subcellular location is the secreted. It catalyses the reaction 4 Fe(2+) + O2 + 4 H(+) = 4 Fe(3+) + 2 H2O. The catalysed reaction is 4 Cu(+) + O2 + 4 H(+) = 4 Cu(2+) + 2 H2O. The enzyme catalyses a hydroperoxide + 2 glutathione = an alcohol + glutathione disulfide + H2O. It carries out the reaction 4 nitric oxide + O2 + 2 H2O = 4 nitrite + 4 H(+). It catalyses the reaction 2 glutathione + H2O2 = glutathione disulfide + 2 H2O. In terms of biological role, multifunctional blue, copper-binding (6-7 atoms per molecule) glycoprotein. It has ferroxidase activity oxidizing Fe(2+) to Fe(3+) without releasing radical oxygen species. It is involved in iron transport across the cell membrane. Copper ions provide a large number of enzymatic activites. Oxidizes highly toxic ferrous ions to the ferric state for further incorporation onto apo-transferrins, catalyzes Cu(+) oxidation and promotes the oxidation of biogenic amines such as norepinephrin and serotonin. Provides Cu(2+) ions for the ascorbate-mediated deaminase degradation of the heparan sulfate chains of GPC1. Has glutathione peroxidase-like activity, can remove both hydrogen peroxide and lipid hydroperoxide in the presence of thiols. Also shows NO-oxidase and NO2 synthase activities that determine endocrine NO homeostasis. The polypeptide is Ceruloplasmin (CP) (Ovis aries (Sheep)).